A 311-amino-acid chain; its full sequence is tRNA dimethylallyltransferase (311 aa).

19–26 (GPSGSGKS) lines the ATP pocket. Residue 21-26 (SGSGKS) coordinates substrate. The tract at residues 44–47 (DSLS) is interaction with substrate tRNA.

It belongs to the IPP transferase family. Monomer. Mg(2+) serves as cofactor.

The catalysed reaction is adenosine(37) in tRNA + dimethylallyl diphosphate = N(6)-dimethylallyladenosine(37) in tRNA + diphosphate. Catalyzes the transfer of a dimethylallyl group onto the adenine at position 37 in tRNAs that read codons beginning with uridine, leading to the formation of N6-(dimethylallyl)adenosine (i(6)A). This is tRNA dimethylallyltransferase from Helicobacter pylori (strain ATCC 700392 / 26695) (Campylobacter pylori).